The sequence spans 147 residues: Large ribosomal subunit protein bL9 (147 aa).

The protein belongs to the bacterial ribosomal protein bL9 family.

Binds to the 23S rRNA. The sequence is that of Large ribosomal subunit protein bL9 from Campylobacter lari (strain RM2100 / D67 / ATCC BAA-1060).